Here is a 520-residue protein sequence, read N- to C-terminus: Sodium-dependent dicarboxylate transporter SdcS (520 aa).

The next 14 membrane-spanning stretches (helical) occupy residues alanine 30–phenylalanine 50, leucine 55–threonine 75, alanine 77–leucine 97, serine 104–methionine 124, serine 160–isoleucine 180, isoleucine 207–isoleucine 227, phenylalanine 242–leucine 262, lysine 298–leucine 318, valine 323–isoleucine 343, glutamate 362–serine 382, glycine 399–valine 419, methionine 428–methionine 448, alanine 452–phenylalanine 472, and leucine 491–isoleucine 511.

It belongs to the SLC13A/DASS transporter (TC 2.A.47) family. NADC subfamily.

The protein localises to the cell membrane. Its function is as follows. Mediates the transport of the dicarboxylates fumarate, malate, and succinate across the cytoplasmic membrane via a Na(+)-electrochemical gradient. The polypeptide is Sodium-dependent dicarboxylate transporter SdcS (sdcS) (Staphylococcus aureus (strain NCTC 8325 / PS 47)).